Consider the following 616-residue polypeptide: tRNA uridine 5-carboxymethylaminomethyl modification enzyme MnmG (616 aa).

FAD contacts are provided by residues 10-15, V122, and S177; that span reads GAGHAG. 271–285 provides a ligand contact to NAD(+); that stretch reads GPRYCPSIEDKVVRF. Residue Q368 coordinates FAD.

The protein belongs to the MnmG family. In terms of assembly, homodimer. Heterotetramer of two MnmE and two MnmG subunits. FAD serves as cofactor.

The protein resides in the cytoplasm. Functionally, NAD-binding protein involved in the addition of a carboxymethylaminomethyl (cmnm) group at the wobble position (U34) of certain tRNAs, forming tRNA-cmnm(5)s(2)U34. The protein is tRNA uridine 5-carboxymethylaminomethyl modification enzyme MnmG of Malacoplasma penetrans (strain HF-2) (Mycoplasma penetrans).